The following is a 559-amino-acid chain: Oxygen-dependent choline dehydrogenase (559 aa).

4-33 (DYIIIGAGSAGNVLAARLTEESDVSVLLLE) contributes to the FAD binding site. The disordered stretch occupies residues 182–202 (EGFGPMDRTVTPKGRRASTAR). Residue His-471 is the Proton acceptor of the active site.

The protein belongs to the GMC oxidoreductase family. The cofactor is FAD.

It catalyses the reaction choline + A = betaine aldehyde + AH2. It carries out the reaction betaine aldehyde + NAD(+) + H2O = glycine betaine + NADH + 2 H(+). The protein operates within amine and polyamine biosynthesis; betaine biosynthesis via choline pathway; betaine aldehyde from choline (cytochrome c reductase route): step 1/1. Functionally, involved in the biosynthesis of the osmoprotectant glycine betaine. Catalyzes the oxidation of choline to betaine aldehyde and betaine aldehyde to glycine betaine at the same rate. This is Oxygen-dependent choline dehydrogenase from Pectobacterium atrosepticum (strain SCRI 1043 / ATCC BAA-672) (Erwinia carotovora subsp. atroseptica).